The chain runs to 151 residues: Arginine repressor (151 aa).

Belongs to the ArgR family.

Its subcellular location is the cytoplasm. The protein operates within amino-acid biosynthesis; L-arginine biosynthesis [regulation]. Regulates arginine biosynthesis genes. The sequence is that of Arginine repressor from Heliobacterium modesticaldum (strain ATCC 51547 / Ice1).